The chain runs to 132 residues: Prefoldin subunit alpha (132 aa).

The protein belongs to the prefoldin subunit alpha family. Heterohexamer of two alpha and four beta subunits.

It localises to the cytoplasm. Molecular chaperone capable of stabilizing a range of proteins. Seems to fulfill an ATP-independent, HSP70-like function in archaeal de novo protein folding. This chain is Prefoldin subunit alpha (pfdA), found in Pyrobaculum aerophilum (strain ATCC 51768 / DSM 7523 / JCM 9630 / CIP 104966 / NBRC 100827 / IM2).